The sequence spans 183 residues: Ribose 1,5-bisphosphate phosphokinase PhnN (183 aa).

Residue 6–13 coordinates ATP; the sequence is GPSGAGKD.

It belongs to the ribose 1,5-bisphosphokinase family.

The catalysed reaction is alpha-D-ribose 1,5-bisphosphate + ATP = 5-phospho-alpha-D-ribose 1-diphosphate + ADP. It participates in metabolic intermediate biosynthesis; 5-phospho-alpha-D-ribose 1-diphosphate biosynthesis; 5-phospho-alpha-D-ribose 1-diphosphate from D-ribose 5-phosphate (route II): step 3/3. In terms of biological role, catalyzes the phosphorylation of ribose 1,5-bisphosphate to 5-phospho-D-ribosyl alpha-1-diphosphate (PRPP). In Agrobacterium fabrum (strain C58 / ATCC 33970) (Agrobacterium tumefaciens (strain C58)), this protein is Ribose 1,5-bisphosphate phosphokinase PhnN.